The following is a 500-amino-acid chain: Oogenesin-3 (500 aa).

The stretch at 116 to 143 (RCKLRVLKWRDEQHDFCGIWPGSHEAED) is one LRR 1; degenerate repeat. Residues 198–222 (HLLCRKLVIETLTKDTVIEIFKIVN) form an LRR 2; degenerate repeat. One copy of the LRR 3; degenerate repeat lies at 223 to 248 (ADCIQELELYSLCLEDLAFLNPYLRQ). Residues 249–285 (MDNLLELTLDHVTDSLSMGDSEMCEEEMITLVSQLPT) form an LRR 4; degenerate repeat. LRR repeat units follow at residues 286-311 (FPCL…LRCL), 312-343 (KKPL…FELK), 344-367 (CLYL…LESV), 368-395 (RHTL…ALSQ), and 396-420 (CSHL…LLQH).

It belongs to the PRAME family. Expressed in ovary, specifically in oocytes. Detected in follicles with two layers of granulosa cells, and are present in early as well as large antral follicles.

This chain is Oogenesin-3, found in Mus musculus (Mouse).